A 113-amino-acid chain; its full sequence is Large ribosomal subunit protein uL22 (113 aa).

Belongs to the universal ribosomal protein uL22 family. Part of the 50S ribosomal subunit.

Functionally, this protein binds specifically to 23S rRNA; its binding is stimulated by other ribosomal proteins, e.g. L4, L17, and L20. It is important during the early stages of 50S assembly. It makes multiple contacts with different domains of the 23S rRNA in the assembled 50S subunit and ribosome. Its function is as follows. The globular domain of the protein is located near the polypeptide exit tunnel on the outside of the subunit, while an extended beta-hairpin is found that lines the wall of the exit tunnel in the center of the 70S ribosome. In Xanthomonas axonopodis pv. citri (strain 306), this protein is Large ribosomal subunit protein uL22.